Consider the following 291-residue polypeptide: Bifunctional protein FolD (291 aa).

NADP(+) contacts are provided by residues 171–173 (GVS) and Ile239.

This sequence belongs to the tetrahydrofolate dehydrogenase/cyclohydrolase family. As to quaternary structure, homodimer.

It catalyses the reaction (6R)-5,10-methylene-5,6,7,8-tetrahydrofolate + NADP(+) = (6R)-5,10-methenyltetrahydrofolate + NADPH. It carries out the reaction (6R)-5,10-methenyltetrahydrofolate + H2O = (6R)-10-formyltetrahydrofolate + H(+). The protein operates within one-carbon metabolism; tetrahydrofolate interconversion. Its function is as follows. Catalyzes the oxidation of 5,10-methylenetetrahydrofolate to 5,10-methenyltetrahydrofolate and then the hydrolysis of 5,10-methenyltetrahydrofolate to 10-formyltetrahydrofolate. The chain is Bifunctional protein FolD from Xylella fastidiosa (strain Temecula1 / ATCC 700964).